We begin with the raw amino-acid sequence, 370 residues long: Anhydro-N-acetylmuramic acid kinase (370 aa).

ATP is bound at residue 13–20; the sequence is GTSMDGVD.

This sequence belongs to the anhydro-N-acetylmuramic acid kinase family.

It carries out the reaction 1,6-anhydro-N-acetyl-beta-muramate + ATP + H2O = N-acetyl-D-muramate 6-phosphate + ADP + H(+). It functions in the pathway amino-sugar metabolism; 1,6-anhydro-N-acetylmuramate degradation. It participates in cell wall biogenesis; peptidoglycan recycling. Catalyzes the specific phosphorylation of 1,6-anhydro-N-acetylmuramic acid (anhMurNAc) with the simultaneous cleavage of the 1,6-anhydro ring, generating MurNAc-6-P. Is required for the utilization of anhMurNAc either imported from the medium or derived from its own cell wall murein, and thus plays a role in cell wall recycling. The sequence is that of Anhydro-N-acetylmuramic acid kinase from Vibrio vulnificus (strain CMCP6).